A 314-amino-acid polypeptide reads, in one-letter code: Homoserine O-acetyltransferase (314 aa).

Cysteine 142 acts as the Acyl-thioester intermediate in catalysis. Substrate is bound by residues lysine 163 and serine 192. Histidine 235 (proton acceptor) is an active-site residue. The active site involves glutamate 237. Residue arginine 249 participates in substrate binding.

The protein belongs to the MetA family.

The protein localises to the cytoplasm. The catalysed reaction is L-homoserine + acetyl-CoA = O-acetyl-L-homoserine + CoA. The protein operates within amino-acid biosynthesis; L-methionine biosynthesis via de novo pathway; O-acetyl-L-homoserine from L-homoserine: step 1/1. Its function is as follows. Transfers an acetyl group from acetyl-CoA to L-homoserine, forming acetyl-L-homoserine. The sequence is that of Homoserine O-acetyltransferase from Streptococcus thermophilus (strain ATCC BAA-250 / LMG 18311).